The primary structure comprises 361 residues: Chorismate synthase (361 aa).

Position 48 (Arg48) interacts with NADP(+). Residues 125 to 127, 238 to 239, Gly278, 293 to 297, and Arg319 each bind FMN; these read RSS, NA, and KPTSS.

This sequence belongs to the chorismate synthase family. As to quaternary structure, homotetramer. FMNH2 serves as cofactor.

The catalysed reaction is 5-O-(1-carboxyvinyl)-3-phosphoshikimate = chorismate + phosphate. Its pathway is metabolic intermediate biosynthesis; chorismate biosynthesis; chorismate from D-erythrose 4-phosphate and phosphoenolpyruvate: step 7/7. Catalyzes the anti-1,4-elimination of the C-3 phosphate and the C-6 proR hydrogen from 5-enolpyruvylshikimate-3-phosphate (EPSP) to yield chorismate, which is the branch point compound that serves as the starting substrate for the three terminal pathways of aromatic amino acid biosynthesis. This reaction introduces a second double bond into the aromatic ring system. This Aliivibrio fischeri (strain ATCC 700601 / ES114) (Vibrio fischeri) protein is Chorismate synthase.